Reading from the N-terminus, the 176-residue chain is Replication restart protein PriC (176 aa).

It belongs to the PriC family. Component of the replication restart primosome, which is composed of PriA, PriB, PriC, DnaB and DnaT; DnaG primase associates transiently with this complex. Interacts with the C-terminus of SSB; this interaction is required to load the main replicative helicase onto substrate replication forks. Interacts with helicase DnaB alone and in the DnaB-DnaC complex, probably 1:1 binding with DnaB. Interacts with DnaT.

Its function is as follows. Involved in the restart of stalled replication forks, which reloads the DnaB replicative helicase on sites other than the origin of replication. Recognizes abandoned replication forks and remodels DNA single-stranded binding protein (SSB) on ssDNA to uncover a loading site for DnaB. There are several restart pathways, the PriA-PriC pathway is a minor restart pathway. Part of the minor PriC-Rep pathway for restart of stalled replication forks, which has a different substrate specificity than PriA. Part of the major restart pathway with PriA, PriB, DnaB, DnaT and DnaG primase. priB and priC have redundant roles in the cell. Binds 7-9 nucleotides of single-stranded (ss)DNA. The protein is Replication restart protein PriC of Klebsiella pneumoniae subsp. pneumoniae (strain ATCC 700721 / MGH 78578).